The primary structure comprises 361 residues: Mitogen-activated protein kinase 14A (361 aa).

Positions 25-309 (YQNLSPVGSG…AAEALAHPYF (285 aa)) constitute a Protein kinase domain. ATP contacts are provided by residues 31–39 (VGSGAYGTV) and K54. D151 acts as the Proton acceptor in catalysis. A Phosphothreonine; by MAP2K6 modification is found at T181. A TXY motif is present at residues 181–183 (TGY). A Phosphotyrosine; by MAP2K6 modification is found at Y183.

Belongs to the protein kinase superfamily. CMGC Ser/Thr protein kinase family. MAP kinase subfamily. The cofactor is Mg(2+). Post-translationally, dually phosphorylated on Thr-181 and Tyr-183, which activates the enzyme. As to expression, exclusively expressed in the ovary.

It localises to the cytoplasm. Its subcellular location is the nucleus. It carries out the reaction L-seryl-[protein] + ATP = O-phospho-L-seryl-[protein] + ADP + H(+). The enzyme catalyses L-threonyl-[protein] + ATP = O-phospho-L-threonyl-[protein] + ADP + H(+). Activated by threonine and tyrosine phosphorylation by the dual specificity kinase, MKK6. Its function is as follows. Serine/threonine kinase which acts as an essential component of the MAP kinase signal transduction pathway. Mapk14a is one of the four p38 MAPKs which play an important role in the cascades of cellular responses evoked by extracellular stimuli such as pro-inflammatory cytokines or physical stress leading to direct activation of transcription factors. Accordingly, p38 MAPKs phosphorylate a broad range of proteins and it has been estimated that they may have approximately 200 to 300 substrates each. Some of the targets are downstream kinases which are activated through phosphorylation and further phosphorylate additional targets. The chain is Mitogen-activated protein kinase 14A (mapk14a) from Cyprinus carpio (Common carp).